Consider the following 704-residue polypeptide: Elongation factor G (704 aa).

In terms of domain architecture, tr-type G spans 8–291 (ANVRNIGIMA…AVIEYLPSPV (284 aa)). Residues 17–24 (AHIDAGKT), 90–94 (DTPGH), and 144–147 (NKMD) each bind GTP.

The protein belongs to the TRAFAC class translation factor GTPase superfamily. Classic translation factor GTPase family. EF-G/EF-2 subfamily.

It localises to the cytoplasm. In terms of biological role, catalyzes the GTP-dependent ribosomal translocation step during translation elongation. During this step, the ribosome changes from the pre-translocational (PRE) to the post-translocational (POST) state as the newly formed A-site-bound peptidyl-tRNA and P-site-bound deacylated tRNA move to the P and E sites, respectively. Catalyzes the coordinated movement of the two tRNA molecules, the mRNA and conformational changes in the ribosome. This Chlorobium phaeobacteroides (strain BS1) protein is Elongation factor G.